The sequence spans 118 residues: DNA-binding protein inhibitor ID-3-A (118 aa).

The bHLH domain maps to 32–84 (SHKGPGMDEPMGLLYDMNGCYSKLKELVPGIPQGSKLSQVEILQHVIDYIFDL).

In terms of assembly, homodimer. Heterodimer with other HLH proteins. Interacts (via HLH domain) with the bHLH protein hes4/hairy2 (via Orange domain). Interacts with stat3. At gastrula stage, expressed in all three germ layers, but becomes localized to discrete domains of the developing nervous system during neurulation, including the anterior neural plate, cement gland, eye anlagen, otic placode and both cranial and trunk premigratory and early migratory neural crest cells. Also expressed in the most dorsal and ventral portions of the myotome, the developing heart and anterior blood islets, and in the tail fin mesenchyme. Expressed at a low level in limbs, with expression decreasing as limbs develop, but expressed at a high level in blastemas (regenerated limbs), where expression is localized to both the blastermal epidermis and mesenchyme. Widely expressed in adults including the liver and heart.

The protein localises to the nucleus. Functionally, transcriptional regulator (lacking a basic DNA binding domain) which negatively regulates the basic helix-loop-helix (bHLH) transcription factors by forming heterodimers and inhibiting their DNA binding and transcriptional activity. Influences cell fate decisions in the embryo by sequestering and blocking the activity of the bHLH transcription factors that control these decisions. Inhibits the binding of myogenic bHLH-containing complexes to E-box DNA, thereby preventing activation of muscle-specific target genes. Also inhibits the activity of neurogenic factor neurod1/neuroD. Plays a role in cell cycle progression and survival of neural crest progenitors; binding to either hes4-B/hairy2b or stat3 blocks the formation of transcription factor complexes and the repressor function of hes4-B/hairy2B, to allow neural crest progenitors to differentiate. May play a role in the regulation of the circadian rhythm. This Xenopus laevis (African clawed frog) protein is DNA-binding protein inhibitor ID-3-A (id3-a).